The following is a 281-amino-acid chain: Pantothenate synthetase (281 aa).

30-37 (MGNLHQGH) is an ATP binding site. The Proton donor role is filled by H37. Position 61 (Q61) interacts with (R)-pantoate. Q61 is a binding site for beta-alanine. Position 149–152 (149–152 (GNKD)) interacts with ATP. Position 155 (Q155) interacts with (R)-pantoate. Residues I178 and 186–189 (MSSR) each bind ATP.

The protein belongs to the pantothenate synthetase family. As to quaternary structure, homodimer.

It is found in the cytoplasm. It carries out the reaction (R)-pantoate + beta-alanine + ATP = (R)-pantothenate + AMP + diphosphate + H(+). It participates in cofactor biosynthesis; (R)-pantothenate biosynthesis; (R)-pantothenate from (R)-pantoate and beta-alanine: step 1/1. Its function is as follows. Catalyzes the condensation of pantoate with beta-alanine in an ATP-dependent reaction via a pantoyl-adenylate intermediate. This is Pantothenate synthetase from Shewanella baltica (strain OS195).